The sequence spans 177 residues: Large ribosomal subunit protein uL6 (177 aa).

The protein belongs to the universal ribosomal protein uL6 family. Part of the 50S ribosomal subunit.

In terms of biological role, this protein binds to the 23S rRNA, and is important in its secondary structure. It is located near the subunit interface in the base of the L7/L12 stalk, and near the tRNA binding site of the peptidyltransferase center. The polypeptide is Large ribosomal subunit protein uL6 (Paracoccus denitrificans (strain Pd 1222)).